The sequence spans 240 residues: Fatty acid metabolism regulator protein (240 aa).

The HTH gntR-type domain occupies Lys-6–Phe-74. Residues Glu-34 to Gln-53 constitute a DNA-binding region (H-T-H motif).

As to quaternary structure, homodimer.

It is found in the cytoplasm. In terms of biological role, multifunctional regulator of fatty acid metabolism. This is Fatty acid metabolism regulator protein from Shewanella amazonensis (strain ATCC BAA-1098 / SB2B).